Reading from the N-terminus, the 133-residue chain is Large-conductance mechanosensitive channel (133 aa).

A run of 2 helical transmembrane segments spans residues 14–34 (VVDLAVGVVIGAAFGKIVSSL) and 67–87 (GNFIQTIFDFLIIAAAIFMFV).

It belongs to the MscL family. Homopentamer.

The protein resides in the cell membrane. In terms of biological role, channel that opens in response to stretch forces in the membrane lipid bilayer. May participate in the regulation of osmotic pressure changes within the cell. The protein is Large-conductance mechanosensitive channel of Bacillus cereus (strain AH187).